The chain runs to 1951 residues: [F-actin]-monooxygenase MICAL2 (1951 aa).

The tract at residues 2–494 (GENEDEKQAQ…KHLYITKEMD (493 aa)) is monooxygenase domain. FAD contacts are provided by residues cysteine 97, 116 to 118 (EKR), 123 to 125 (RNN), phenylalanine 183, tyrosine 298, and aspartate 398. Positions 516 to 619 (DIRPNKLLTW…MVMYLSKFYE (104 aa)) constitute a Calponin-homology (CH) domain. A Phosphoserine modification is found at serine 631. The Nuclear localization signal signature appears at 660–681 (RKRTPRVDTQTEENDMNKRRRQ). 2 disordered regions span residues 663-712 (TPRV…SQNK) and 891-921 (KRVP…AADS). Residues 691 to 700 (SFSSRSLGSS) are compositionally biased toward low complexity. Pro residues predominate over residues 896-909 (AHPPSPPSCLPSPH). Residues 910-921 (PAAASSPPAADS) show a composition bias toward low complexity. An LIM zinc-binding domain is found at 991-1053 (DTCYFCKKRV…KPHFVHCKTS (63 aa)). Residues cysteine 993, cysteine 996, histidine 1014, cysteine 1017, cysteine 1020, cysteine 1023, cysteine 1043, and histidine 1046 each contribute to the Zn(2+) site. At threonine 1052 the chain carries Phosphoserine. 10 disordered regions span residues 1054 to 1141 (SKQR…RISP), 1158 to 1314 (TSED…VSPT), 1348 to 1368 (VEPG…EGCQ), 1383 to 1427 (ILGK…RKLG), 1451 to 1476 (HKTG…TCSS), 1489 to 1580 (QKKA…AKKA), 1594 to 1624 (AQAS…STTP), 1678 to 1697 (GDFF…VPSL), 1706 to 1731 (STSM…GEGG), and 1747 to 1766 (PVTE…EADS). Positions 1061-1070 (AELNQQREEE) are enriched in basic and acidic residues. Polar residues-rich tracts occupy residues 1129-1138 (PRPSEWTSVR), 1228-1239 (HSLQSPTPSKYQ), and 1246-1256 (QSNSTPMNQRA). Residues 1257-1268 (PSPPKEPPPPPS) show a composition bias toward pro residues. Over residues 1269 to 1285 (LSSSSSLPSSFSSASVP) the composition is skewed to low complexity. Over residues 1291–1306 (DSSSPQVTYNLHSPQI) the composition is skewed to polar residues. Positions 1314–1353 (TPIYLRRARAQGIVKEIPLYLPHSPMLESTEDCLVEPGRE) are interaction with MAPK1. A compositionally biased stretch (basic and acidic residues) spans 1350-1359 (PGRESLRSPE). Positions 1532–1545 (EAGKKTSPKPESKT) are enriched in basic and acidic residues. Residues 1599–1616 (LSLPNSILRSRSLPSRPS) are compositionally biased toward low complexity. A compositionally biased stretch (basic and acidic residues) spans 1678-1688 (GDFFNSPKEEG). Serine 1683 is subject to Phosphoserine. Over residues 1706–1720 (STSMGQVAHPSSTGQ) the composition is skewed to polar residues. Low complexity predominate over residues 1749 to 1759 (TEATSSPTSSS). One can recognise a bMERB domain in the interval 1789–1939 (KQEELKRLHK…ERTQDQHFEN (151 aa)).

Belongs to the Mical family. As to quaternary structure, interacts with PLXNA4. Interacts with RAB1B. Interacts with MAPK1/ERK2. Interacts with RAB1B, RAB35, RAB8A, RAB10, RAB13 and RAB15 (in their GTP-bound forms); binding to RAB1B and RAB35 is of low affinity compared to other Rab proteins; binding to RAB1B and RAB35 is of low affinity compared to other Rab proteins; at least in case of RAB8A may bind 2 molecules of RAB8A simultaneously through a high and a low affinity binding site, respectively. FAD serves as cofactor. In terms of tissue distribution, expressed only in testis (at protein level).

The protein resides in the cytoplasm. Its subcellular location is the nucleus. The enzyme catalyses L-methionyl-[F-actin] + NADPH + O2 + H(+) = L-methionyl-(R)-S-oxide-[F-actin] + NADP(+) + H2O. In terms of biological role, methionine monooxygenase that promotes depolymerization of F-actin by mediating oxidation of residues 'Met-44' and 'Met-47' on actin to form methionine-sulfoxide, resulting in actin filament disassembly and preventing repolymerization. Regulates the disassembly of branched actin networks also by oxidizing ARP3B-containing ARP2/3 complexes leading to ARP3B dissociation from the network. Acts as a key regulator of the SRF signaling pathway elicited by nerve growth factor and serum: mediates oxidation and subsequent depolymerization of nuclear actin, leading to increase MKL1/MRTF-A presence in the nucleus and promote SRF:MKL1/MRTF-A-dependent gene transcription. Does not activate SRF:MKL1/MRTF-A through RhoA. In Mus musculus (Mouse), this protein is [F-actin]-monooxygenase MICAL2.